A 259-amino-acid chain; its full sequence is V-type proton ATPase subunit D (259 aa).

The segment at 214-259 is disordered; the sequence is KLKEQEAAQRALEGPPKEEAGGTHSENQPPRNLLAVEEDNLPVLFN.

This sequence belongs to the V-ATPase D subunit family. V-ATPase is a heteromultimeric enzyme made up of two complexes: the ATP-hydrolytic V1 complex and the proton translocation V0 complex. The V1 complex consists of three catalytic AB heterodimers that form a heterohexamer, three peripheral stalks each consisting of EG heterodimers, one central rotor including subunits D and F, and the regulatory subunits C and H. The proton translocation complex V0 consists of the proton transport subunit a, a ring of proteolipid subunits c9c'', rotary subunit d, and The proton translocation complex V0 consists of the proton transport subunit a, a ring of proteolipid subunits c9c'', rotary subunit d, subunits e and f, and the accessory subunits vah-19/Ac45 and vah-20/PRR.

In terms of biological role, subunit of the V1 complex of vacuolar(H+)-ATPase (V-ATPase), a multisubunit enzyme composed of a peripheral complex (V1) that hydrolyzes ATP and a membrane integral complex (V0) that translocates protons. V-ATPase is responsible for acidifying and maintaining the pH of intracellular compartments and in some cell types, is targeted to the plasma membrane, where it is responsible for acidifying the extracellular environment. The chain is V-type proton ATPase subunit D from Caenorhabditis briggsae.